We begin with the raw amino-acid sequence, 664 residues long: Macoilin (664 aa).

The next 4 membrane-spanning stretches (helical) occupy residues 28-48 (TFLY…DFVV), 75-95 (AFSV…LLFI), 120-140 (VCLP…AIRF), and 154-174 (FAAH…KSYV). The segment covering 253–265 (REKGKEKDKDAKK) has biased composition (basic and acidic residues). Residues 253-274 (REKGKEKDKDAKKHNLGINNNN) are disordered. The residue at position 305 (serine 305) is a Phosphoserine. Residues 320–348 (KNYKNASGVVNSSPRSHSATNGSIPSSSS) show a composition bias toward polar residues. Residues 320–375 (KNYKNASGVVNSSPRSHSATNGSIPSSSSKNEKKQKCTSKSPSTHKDLMENCIPNN) form a disordered region. Residue asparagine 324 is glycosylated (N-linked (GlcNAc...) asparagine). Residue serine 332 is modified to Phosphoserine. Asparagine 340 and asparagine 452 each carry an N-linked (GlcNAc...) asparagine glycan. The segment at 630–664 (TSPLSPVSPHYSSKFVETSPSGLDPNASVYQPLKK) is disordered. Residues serine 631 and serine 634 each carry the phosphoserine modification. Residue asparagine 655 is glycosylated (N-linked (GlcNAc...) asparagine).

It belongs to the macoilin family.

It is found in the rough endoplasmic reticulum membrane. Its subcellular location is the nucleus membrane. Functionally, plays a role in the regulation of neuronal activity. The sequence is that of Macoilin (MACO1) from Pan troglodytes (Chimpanzee).